The chain runs to 131 residues: Peptidyl-prolyl cis-trans isomerase NIMA-interacting 4 (131 aa).

Positions Met1–Glu25 are necessary for nuclear localization and DNA-binding. The disordered stretch occupies residues Met1–Ala37. The necessary for association with the pre-rRNP complexes stretch occupies residues Met1 to Arg41. Ser19 carries the phosphoserine; by CK2 modification. A PpiC domain is found at Gly35–Gly129.

It belongs to the PpiC/parvulin rotamase family. PIN4 subfamily. Found in pre-ribosomal ribonucleoprotein (pre-rRNP) complexes. In terms of processing, phosphorylated. Phosphorylation occurs both in the nucleus and the cytoplasm. Phosphorylation at Ser-19 does not affect its PPIase activity but is required for nuclear localization, and the dephosphorylation is a prerequisite for the binding to DNA. The unphosphorylated form associates with the pre-rRNP complexes in the nucleus.

It localises to the nucleus. It is found in the nucleolus. The protein resides in the cytoplasm. Its subcellular location is the cytoskeleton. The protein localises to the spindle. It catalyses the reaction [protein]-peptidylproline (omega=180) = [protein]-peptidylproline (omega=0). Involved as a ribosomal RNA processing factor in ribosome biogenesis. Binds to tightly bent AT-rich stretches of double-stranded DNA. This chain is Peptidyl-prolyl cis-trans isomerase NIMA-interacting 4 (PIN4), found in Bos taurus (Bovine).